The sequence spans 604 residues: Aspartate--tRNA(Asp/Asn) ligase (604 aa).

An L-aspartate-binding site is contributed by E177. The aspartate stretch occupies residues 201–204; that stretch reads QLFK. Residue R223 coordinates L-aspartate. Residues 223–225 and Q232 contribute to the ATP site; that span reads RDE. Position 457 (H457) interacts with L-aspartate. An ATP-binding site is contributed by E495. R502 serves as a coordination point for L-aspartate. 547–550 contributes to the ATP binding site; that stretch reads GLDR.

This sequence belongs to the class-II aminoacyl-tRNA synthetase family. Type 1 subfamily. Homodimer.

The protein localises to the cytoplasm. The catalysed reaction is tRNA(Asx) + L-aspartate + ATP = L-aspartyl-tRNA(Asx) + AMP + diphosphate. Functionally, aspartyl-tRNA synthetase with relaxed tRNA specificity since it is able to aspartylate not only its cognate tRNA(Asp) but also tRNA(Asn). Reaction proceeds in two steps: L-aspartate is first activated by ATP to form Asp-AMP and then transferred to the acceptor end of tRNA(Asp/Asn). In Synechococcus sp. (strain RCC307), this protein is Aspartate--tRNA(Asp/Asn) ligase.